The sequence spans 208 residues: Large ribosomal subunit protein uL3 (208 aa).

Residues 123 to 147 (RHGQSRGPMAHGSRYHRRPGSMGPV) form a disordered region.

It belongs to the universal ribosomal protein uL3 family. In terms of assembly, part of the 50S ribosomal subunit. Forms a cluster with proteins L14 and L19.

Its function is as follows. One of the primary rRNA binding proteins, it binds directly near the 3'-end of the 23S rRNA, where it nucleates assembly of the 50S subunit. The chain is Large ribosomal subunit protein uL3 from Streptococcus sanguinis (strain SK36).